Here is a 171-residue protein sequence, read N- to C-terminus: 3-hydroxydecanoyl-[acyl-carrier-protein] dehydratase (171 aa).

His-70 is a catalytic residue.

This sequence belongs to the thioester dehydratase family. FabA subfamily. In terms of assembly, homodimer.

It localises to the cytoplasm. It catalyses the reaction a (3R)-hydroxyacyl-[ACP] = a (2E)-enoyl-[ACP] + H2O. The catalysed reaction is (3R)-hydroxydecanoyl-[ACP] = (2E)-decenoyl-[ACP] + H2O. The enzyme catalyses (2E)-decenoyl-[ACP] = (3Z)-decenoyl-[ACP]. It participates in lipid metabolism; fatty acid biosynthesis. Necessary for the introduction of cis unsaturation into fatty acids. Catalyzes the dehydration of (3R)-3-hydroxydecanoyl-ACP to E-(2)-decenoyl-ACP and then its isomerization to Z-(3)-decenoyl-ACP. Can catalyze the dehydratase reaction for beta-hydroxyacyl-ACPs with saturated chain lengths up to 16:0, being most active on intermediate chain length. In Nitrosococcus oceani (strain ATCC 19707 / BCRC 17464 / JCM 30415 / NCIMB 11848 / C-107), this protein is 3-hydroxydecanoyl-[acyl-carrier-protein] dehydratase.